Consider the following 152-residue polypeptide: Small ribosomal subunit protein uS19 (152 aa).

The protein belongs to the universal ribosomal protein uS19 family.

The protein is Small ribosomal subunit protein uS19 (RPS15) of Podospora anserina (Pleurage anserina).